The following is a 118-amino-acid chain: SPbeta prophage-derived uncharacterized protein YolB (118 aa).

In Bacillus subtilis (strain 168), this protein is SPbeta prophage-derived uncharacterized protein YolB (yolB).